Consider the following 232-residue polypeptide: uncharacterized protein (232 aa).

The N-terminal stretch at 1 to 32 (MTTSKIATAFKTATFALAAGAVALGLASPADA) is a signal peptide.

This is an uncharacterized protein from Mycobacterium bovis (strain ATCC BAA-935 / AF2122/97).